A 378-amino-acid chain; its full sequence is MSHLDNGFRSLTLQRFPATDDVNPLQAWEAADEYLLQQLDDTEIRGPVLILNDAFGALSCALAEHKPYSIGDSYISELATRENLRLNGIDESSVKFLDSTADYPQQPGVVLIKVPKTLALLEQQLRALRKVVTPDTRIIAGAKARDIHTSTLELFEKVLGPTTTTLAWKKARLINCTFNEPPLVDAPQTVSWKLEGTDWTIHNHANVFSRTGLDIGARFFMQHLPENLEGEIVDLGCGNGVIGLTLLDKNPQAKVVFVDESPMAVASSRLNVETNMPEALDRCEFMINNALSGVEPFRFNAVLCNPPFHQQHALTDNVAWEMFHHARRCLKINGELYIVANRHLDYFHKLKKIFGNCTTIATNNKFVVLKAVKLGRRR.

Belongs to the methyltransferase superfamily. RlmG family.

The protein localises to the cytoplasm. It catalyses the reaction guanosine(1835) in 23S rRNA + S-adenosyl-L-methionine = N(2)-methylguanosine(1835) in 23S rRNA + S-adenosyl-L-homocysteine + H(+). Its function is as follows. Specifically methylates the guanine in position 1835 (m2G1835) of 23S rRNA. This is Ribosomal RNA large subunit methyltransferase G from Escherichia coli O6:K15:H31 (strain 536 / UPEC).